Consider the following 548-residue polypeptide: Chaperonin GroEL (548 aa).

Residues 29-32 (THGP), Lys50, 86-90 (DGTTT), Gly414, and Asp493 contribute to the ATP site.

Belongs to the chaperonin (HSP60) family. Forms a cylinder of 14 subunits composed of two heptameric rings stacked back-to-back. Interacts with the co-chaperonin GroES.

Its subcellular location is the cytoplasm. The enzyme catalyses ATP + H2O + a folded polypeptide = ADP + phosphate + an unfolded polypeptide.. In terms of biological role, together with its co-chaperonin GroES, plays an essential role in assisting protein folding. The GroEL-GroES system forms a nano-cage that allows encapsulation of the non-native substrate proteins and provides a physical environment optimized to promote and accelerate protein folding. The sequence is that of Chaperonin GroEL from Desulfatibacillum aliphaticivorans.